The chain runs to 212 residues: Probable GTP-binding protein EngB (212 aa).

The 173-residue stretch at Ser-38 to Pro-210 folds into the EngB-type G domain. Residues Gly-46 to Ser-53, Gly-73 to Gln-77, Asp-91 to Gly-94, Thr-158 to Asp-161, and Val-189 to Asn-191 contribute to the GTP site. Residues Ser-53 and Thr-75 each coordinate Mg(2+).

It belongs to the TRAFAC class TrmE-Era-EngA-EngB-Septin-like GTPase superfamily. EngB GTPase family. It depends on Mg(2+) as a cofactor.

Necessary for normal cell division and for the maintenance of normal septation. The chain is Probable GTP-binding protein EngB from Rickettsia peacockii (strain Rustic).